A 103-amino-acid chain; its full sequence is Phosphoribosyl-ATP pyrophosphatase (103 aa).

Positions 79–103 (SVQAELERREGKLSTTRDRKEIDEL) are disordered. A compositionally biased stretch (basic and acidic residues) spans 83 to 103 (ELERREGKLSTTRDRKEIDEL).

This sequence belongs to the PRA-PH family.

It localises to the cytoplasm. The enzyme catalyses 1-(5-phospho-beta-D-ribosyl)-ATP + H2O = 1-(5-phospho-beta-D-ribosyl)-5'-AMP + diphosphate + H(+). The protein operates within amino-acid biosynthesis; L-histidine biosynthesis; L-histidine from 5-phospho-alpha-D-ribose 1-diphosphate: step 2/9. The chain is Phosphoribosyl-ATP pyrophosphatase from Listeria welshimeri serovar 6b (strain ATCC 35897 / DSM 20650 / CCUG 15529 / CIP 8149 / NCTC 11857 / SLCC 5334 / V8).